Consider the following 135-residue polypeptide: Large ribosomal subunit protein uL22 (135 aa).

The interval 112-135 (KKPEKKKLKAKSAKTEEAPKAAEV) is disordered. Positions 124 to 135 (AKTEEAPKAAEV) are enriched in basic and acidic residues.

This sequence belongs to the universal ribosomal protein uL22 family. Part of the 50S ribosomal subunit.

This protein binds specifically to 23S rRNA; its binding is stimulated by other ribosomal proteins, e.g. L4, L17, and L20. It is important during the early stages of 50S assembly. It makes multiple contacts with different domains of the 23S rRNA in the assembled 50S subunit and ribosome. Its function is as follows. The globular domain of the protein is located near the polypeptide exit tunnel on the outside of the subunit, while an extended beta-hairpin is found that lines the wall of the exit tunnel in the center of the 70S ribosome. The chain is Large ribosomal subunit protein uL22 from Brachyspira hyodysenteriae (strain ATCC 49526 / WA1).